A 354-amino-acid chain; its full sequence is Uroporphyrinogen decarboxylase (354 aa).

Residues R27–R31, D77, Y154, T209, and H327 each bind substrate.

Belongs to the uroporphyrinogen decarboxylase family. As to quaternary structure, homodimer.

It localises to the cytoplasm. It carries out the reaction uroporphyrinogen III + 4 H(+) = coproporphyrinogen III + 4 CO2. It functions in the pathway porphyrin-containing compound metabolism; protoporphyrin-IX biosynthesis; coproporphyrinogen-III from 5-aminolevulinate: step 4/4. In terms of biological role, catalyzes the decarboxylation of four acetate groups of uroporphyrinogen-III to yield coproporphyrinogen-III. In Escherichia coli O6:K15:H31 (strain 536 / UPEC), this protein is Uroporphyrinogen decarboxylase.